Reading from the N-terminus, the 344-residue chain is Heat-inducible transcription repressor HrcA (344 aa).

Belongs to the HrcA family.

In terms of biological role, negative regulator of class I heat shock genes (grpE-dnaK-dnaJ and groELS operons). Prevents heat-shock induction of these operons. The protein is Heat-inducible transcription repressor HrcA of Streptococcus pyogenes serotype M1.